We begin with the raw amino-acid sequence, 272 residues long: Indole-3-glycerol phosphate synthase (272 aa).

This sequence belongs to the TrpC family.

It carries out the reaction 1-(2-carboxyphenylamino)-1-deoxy-D-ribulose 5-phosphate + H(+) = (1S,2R)-1-C-(indol-3-yl)glycerol 3-phosphate + CO2 + H2O. It functions in the pathway amino-acid biosynthesis; L-tryptophan biosynthesis; L-tryptophan from chorismate: step 4/5. The polypeptide is Indole-3-glycerol phosphate synthase (Mycobacterium leprae (strain Br4923)).